Here is a 224-residue protein sequence, read N- to C-terminus: MLLQIDRVLTTEELNQLNTLLQAGVFEDGKWTAGIYAKTVKDNQQLVQEGEEYRVASEIVLSALSRNQLFQAYVQPKIIGPLLFSRYEVGMAYGTHTDNALMGSGDQLRRSDVSLTIFLNDPFAYEGGALVLDTSLGEQYFKLPAGSMIVYPSIFLHRVETVSKGVRLVAVAWVQSLIRDPLERELLFELDTVRRSLFEKQGKTVDFDLLCKVYSNLLRKWAEI.

The 100-residue stretch at 77–176 (KIIGPLLFSR…RLVAVAWVQS (100 aa)) folds into the Fe2OG dioxygenase domain. Residues His-96, Asp-98, and His-157 each coordinate Fe cation. Arg-167 contacts 2-oxoglutarate.

The cofactor is Fe(2+). L-ascorbate is required as a cofactor.

The chain is PKHD-type hydroxylase tll1907 from Thermosynechococcus vestitus (strain NIES-2133 / IAM M-273 / BP-1).